The primary structure comprises 483 residues: Argininosuccinate lyase (483 aa).

This sequence belongs to the lyase 1 family. Argininosuccinate lyase subfamily.

Its subcellular location is the cytoplasm. The catalysed reaction is 2-(N(omega)-L-arginino)succinate = fumarate + L-arginine. Its pathway is amino-acid biosynthesis; L-arginine biosynthesis; L-arginine from L-ornithine and carbamoyl phosphate: step 3/3. The chain is Argininosuccinate lyase from Albidiferax ferrireducens (strain ATCC BAA-621 / DSM 15236 / T118) (Rhodoferax ferrireducens).